Reading from the N-terminus, the 660-residue chain is UvrABC system protein B (660 aa).

The Helicase ATP-binding domain occupies 26–414; sequence KKVLAGQRHQ…PEMTEQIIRP (389 aa). Residue 39–46 participates in ATP binding; that stretch reads GATGTGKT. A Beta-hairpin motif is present at residues 92 to 115; sequence YYDYYQPEAYVPSTDTFIEKDASI. Residues 430-596 enclose the Helicase C-terminal domain; that stretch reads QIDNLIEEIR…TIRKEVRDVI (167 aa). One can recognise a UVR domain in the interval 624–659; that stretch reads EKVIEQMENEMKQAAKDLDFEKAAELRDVILELKAE.

Belongs to the UvrB family. Forms a heterotetramer with UvrA during the search for lesions. Interacts with UvrC in an incision complex.

It is found in the cytoplasm. Functionally, the UvrABC repair system catalyzes the recognition and processing of DNA lesions. A damage recognition complex composed of 2 UvrA and 2 UvrB subunits scans DNA for abnormalities. Upon binding of the UvrA(2)B(2) complex to a putative damaged site, the DNA wraps around one UvrB monomer. DNA wrap is dependent on ATP binding by UvrB and probably causes local melting of the DNA helix, facilitating insertion of UvrB beta-hairpin between the DNA strands. Then UvrB probes one DNA strand for the presence of a lesion. If a lesion is found the UvrA subunits dissociate and the UvrB-DNA preincision complex is formed. This complex is subsequently bound by UvrC and the second UvrB is released. If no lesion is found, the DNA wraps around the other UvrB subunit that will check the other stand for damage. This is UvrABC system protein B from Oceanobacillus iheyensis (strain DSM 14371 / CIP 107618 / JCM 11309 / KCTC 3954 / HTE831).